The sequence spans 72 residues: Translation initiation factor IF-1 (72 aa).

In terms of domain architecture, S1-like spans 1-72 (MAKSDVIEVD…DKGRITYRYK (72 aa)).

Belongs to the IF-1 family. As to quaternary structure, component of the 30S ribosomal translation pre-initiation complex which assembles on the 30S ribosome in the order IF-2 and IF-3, IF-1 and N-formylmethionyl-tRNA(fMet); mRNA recruitment can occur at any time during PIC assembly.

The protein resides in the cytoplasm. One of the essential components for the initiation of protein synthesis. Stabilizes the binding of IF-2 and IF-3 on the 30S subunit to which N-formylmethionyl-tRNA(fMet) subsequently binds. Helps modulate mRNA selection, yielding the 30S pre-initiation complex (PIC). Upon addition of the 50S ribosomal subunit IF-1, IF-2 and IF-3 are released leaving the mature 70S translation initiation complex. The polypeptide is Translation initiation factor IF-1 (Sulfurimonas denitrificans (strain ATCC 33889 / DSM 1251) (Thiomicrospira denitrificans (strain ATCC 33889 / DSM 1251))).